The chain runs to 25 residues: U11-ctenitoxin-Co1b (25 aa).

Disulfide bonds link Cys-4-Cys-18 and Cys-11-Cys-22.

In terms of assembly, monomer. Expressed by the venom gland.

It localises to the secreted. Its function is as follows. Neurotoxin. The polypeptide is U11-ctenitoxin-Co1b (Ctenus ornatus (Brazilian spider)).